The chain runs to 48 residues: MTNSSSPLQAVEVRTYPIFTVRWLAVHALAIPTVFFLGAIAAMQFIRR.

Residues 23 to 39 form a helical membrane-spanning segment; that stretch reads WLAVHALAIPTVFFLGA. His27 provides a ligand contact to heme.

Belongs to the PsbE/PsbF family. In terms of assembly, heterodimer of an alpha subunit and a beta subunit. PSII is composed of 1 copy each of membrane proteins PsbA, PsbB, PsbC, PsbD, PsbE, PsbF, PsbH, PsbI, PsbJ, PsbK, PsbL, PsbM, PsbT, PsbX, PsbY, Psb30/Ycf12, peripheral proteins PsbO, CyanoQ (PsbQ), PsbU, PsbV and a large number of cofactors. It forms dimeric complexes. Heme b is required as a cofactor.

Its subcellular location is the cellular thylakoid membrane. Its function is as follows. This b-type cytochrome is tightly associated with the reaction center of photosystem II (PSII). PSII is a light-driven water:plastoquinone oxidoreductase that uses light energy to abstract electrons from H(2)O, generating O(2) and a proton gradient subsequently used for ATP formation. It consists of a core antenna complex that captures photons, and an electron transfer chain that converts photonic excitation into a charge separation. This Prochlorococcus marinus (strain SARG / CCMP1375 / SS120) protein is Cytochrome b559 subunit beta.